Here is a 306-residue protein sequence, read N- to C-terminus: Ribosomal protein L11 methyltransferase (306 aa).

4 residues coordinate S-adenosyl-L-methionine: Thr154, Gly179, Asp201, and Asn242.

This sequence belongs to the methyltransferase superfamily. PrmA family.

The protein localises to the cytoplasm. The catalysed reaction is L-lysyl-[protein] + 3 S-adenosyl-L-methionine = N(6),N(6),N(6)-trimethyl-L-lysyl-[protein] + 3 S-adenosyl-L-homocysteine + 3 H(+). Methylates ribosomal protein L11. The chain is Ribosomal protein L11 methyltransferase from Xylella fastidiosa (strain Temecula1 / ATCC 700964).